The chain runs to 704 residues: Elongation factor G (704 aa).

The region spanning 6–282 is the tr-type G domain; the sequence is NKVRNIGIMA…AVIDYLPTPL (277 aa). GTP-binding positions include 15–22, 79–83, and 133–136; these read AHIDAGKT, DTPGH, and NKMD.

This sequence belongs to the TRAFAC class translation factor GTPase superfamily. Classic translation factor GTPase family. EF-G/EF-2 subfamily.

It is found in the cytoplasm. Functionally, catalyzes the GTP-dependent ribosomal translocation step during translation elongation. During this step, the ribosome changes from the pre-translocational (PRE) to the post-translocational (POST) state as the newly formed A-site-bound peptidyl-tRNA and P-site-bound deacylated tRNA move to the P and E sites, respectively. Catalyzes the coordinated movement of the two tRNA molecules, the mRNA and conformational changes in the ribosome. This chain is Elongation factor G, found in Corynebacterium diphtheriae (strain ATCC 700971 / NCTC 13129 / Biotype gravis).